We begin with the raw amino-acid sequence, 467 residues long: Acyl-lipid (8-3)-desaturase B (467 aa).

The Cytochrome b5 heme-binding domain occupies 12 to 89; it reads LKLYTWDEVS…IKQYEIGYIS (78 aa). Residues H47 and H70 each coordinate heme. The next 2 helical transmembrane spans lie at 123–143 and 152–172; these read VSVG…VTYY and FWLN…FGLH. The Histidine box-1 motif lies at 175–179; sequence HDACH. Residues 187 to 207 traverse the membrane as a helical segment; sequence MTWKILGATFDLFAGASFYAW. The Histidine box-2 signature appears at 211–216; it reads HVIGHH. 2 consecutive transmembrane segments (helical) span residues 293 to 313 and 317 to 337; these read AIFI…PLIY and FSHL…YLAI. Residues 400 to 404 carry the Histidine box-3 motif; the sequence is QVIHH.

It belongs to the fatty acid desaturase type 1 family. It depends on Fe(2+) as a cofactor.

It localises to the membrane. The catalysed reaction is an (8Z,11Z,14Z)-icosatrienoyl-containing glycerolipid + 2 Fe(II)-[cytochrome b5] + O2 + 2 H(+) = (5Z,8Z,11Z,14Z)-eicosatetraenoyl-containing glycerolipid + 2 Fe(III)-[cytochrome b5] + 2 H2O. It carries out the reaction an (8Z,11Z,14Z,17Z)-eicosatetraenoyl-containing glycerolipid + 2 Fe(II)-[cytochrome b5] + O2 + 2 H(+) = a (5Z,8Z,11Z,14Z,17Z)-eicosapentaenoyl-containing glycerolipid + 2 Fe(III)-[cytochrome b5] + 2 H2O. In terms of biological role, fatty acid desaturase that introduces a cis double bond at the 5-position in 18-carbon polyunsaturated fatty acids. The chain is Acyl-lipid (8-3)-desaturase B (fadB) from Dictyostelium discoideum (Social amoeba).